We begin with the raw amino-acid sequence, 89 residues long: Small ribosomal subunit protein uS15 (89 aa).

The protein belongs to the universal ribosomal protein uS15 family. Part of the 30S ribosomal subunit. Forms a bridge to the 50S subunit in the 70S ribosome, contacting the 23S rRNA.

One of the primary rRNA binding proteins, it binds directly to 16S rRNA where it helps nucleate assembly of the platform of the 30S subunit by binding and bridging several RNA helices of the 16S rRNA. Its function is as follows. Forms an intersubunit bridge (bridge B4) with the 23S rRNA of the 50S subunit in the ribosome. The protein is Small ribosomal subunit protein uS15 of Escherichia coli O139:H28 (strain E24377A / ETEC).